Reading from the N-terminus, the 141-residue chain is Hemoglobin subunit alpha-A (141 aa).

One can recognise a Globin domain in the interval valine 1–arginine 141. Histidine 58 serves as a coordination point for O2. Histidine 87 is a heme b binding site.

The protein belongs to the globin family. In terms of assembly, heterotetramer of two alpha chains and two beta chains. Red blood cells.

Its function is as follows. Involved in oxygen transport from the lung to the various peripheral tissues. This chain is Hemoglobin subunit alpha-A (HBAA), found in Phoenicopterus ruber (American flamingo).